Reading from the N-terminus, the 49-residue chain is Large ribosomal subunit protein bL32 (49 aa).

The tract at residues 25–49 (AKPVKDKDGTYKLPHHINPTTGEYK) is disordered.

It belongs to the bacterial ribosomal protein bL32 family.

The protein is Large ribosomal subunit protein bL32 of Sulfurimonas denitrificans (strain ATCC 33889 / DSM 1251) (Thiomicrospira denitrificans (strain ATCC 33889 / DSM 1251)).